The primary structure comprises 155 residues: Small ribosomal subunit protein uS7 (155 aa).

Belongs to the universal ribosomal protein uS7 family. In terms of assembly, part of the 30S ribosomal subunit. Contacts proteins S9 and S11.

In terms of biological role, one of the primary rRNA binding proteins, it binds directly to 16S rRNA where it nucleates assembly of the head domain of the 30S subunit. Is located at the subunit interface close to the decoding center, probably blocks exit of the E-site tRNA. The chain is Small ribosomal subunit protein uS7 from Sulfurimonas denitrificans (strain ATCC 33889 / DSM 1251) (Thiomicrospira denitrificans (strain ATCC 33889 / DSM 1251)).